A 160-amino-acid polypeptide reads, in one-letter code: Transcription antitermination protein NusB (160 aa).

Belongs to the NusB family.

In terms of biological role, involved in transcription antitermination. Required for transcription of ribosomal RNA (rRNA) genes. Binds specifically to the boxA antiterminator sequence of the ribosomal RNA (rrn) operons. The chain is Transcription antitermination protein NusB from Rhizobium etli (strain CIAT 652).